Consider the following 234-residue polypeptide: Sugar fermentation stimulation protein homolog (234 aa).

The protein belongs to the SfsA family.

This Shewanella pealeana (strain ATCC 700345 / ANG-SQ1) protein is Sugar fermentation stimulation protein homolog.